The sequence spans 249 residues: NAD kinase (249 aa).

The active-site Proton acceptor is the D49. Residues 49–50 (DG), R54, 115–116 (NE), K126, R143, D145, I153, 156–161 (TGYAFS), A180, and Q211 contribute to the NAD(+) site.

The protein belongs to the NAD kinase family. Homotetramer. It depends on a divalent metal cation as a cofactor.

It is found in the cytoplasm. The catalysed reaction is NAD(+) + ATP = ADP + NADP(+) + H(+). Functionally, involved in the regulation of the intracellular balance between NAD(H) and NADP(H), and is a key enzyme in the biosynthesis of NADP. Catalyzes specifically the phosphorylation on 2'-hydroxyl of the adenosine moiety of NAD to yield NADP. The polypeptide is NAD kinase (Archaeoglobus fulgidus (strain ATCC 49558 / DSM 4304 / JCM 9628 / NBRC 100126 / VC-16)).